A 127-amino-acid chain; its full sequence is Fumarate reductase subunit C (127 aa).

3 helical membrane-spanning segments follow: residues 30-50, 67-87, and 107-127; these read ATVLPLILFTLFLTVGLGSLV, VVIAINIVALLGSLLHAHTFF, and IIVLAQWAAVAFISLIVLIVV.

The protein belongs to the FrdC family. In terms of assembly, part of an enzyme complex containing four subunits: a flavoprotein (FrdA), an iron-sulfur protein (FrdB), and two hydrophobic anchor proteins (FrdC and FrdD).

It localises to the cell inner membrane. Functionally, anchors the catalytic components of the fumarate reductase complex to the cell membrane, binds quinones. This chain is Fumarate reductase subunit C, found in Vibrio vulnificus (strain CMCP6).